Reading from the N-terminus, the 434-residue chain is Protein phosphatase 2C 56 (434 aa).

The PPM-type phosphatase domain maps to 128-422 (LYGFTSICGR…DNISVVVVDL (295 aa)). Residues Asp177, Asp261, Ser262, Asp347, and Asp413 each coordinate Mg(2+). Residues 423–427 (KPRRK) carry the Nuclear localization signal motif.

It belongs to the PP2C family. As to quaternary structure, interacts with SPK1, ATHB-6, CIPK15/PKS3, GPX3, SRK2E/OST1, SRK2D, SRK2I, SCAR1, SCAR2, SCAR3 and SCARL. Binds to the PA released by the phospholipase D alpha 1 (PLDALPHA1) in response to ABA during the stomatal closure regulation. Interacts with ABA-bounded PYR1, PYL1, PYL2, PYL3, PYL4, PYL5, PYL6, PYL7, PYL8, PYL9, PYL10, and with free PYL2, PYL3, PYL4 and PYL13. Binds to RPL12B, CPK21 and CPK23. Binds to MAPKKK18. Interacts with KIN10. Interacts with phosphorylated PYL8/RCAR3. It depends on Mg(2+) as a cofactor. The cofactor is Mn(2+). As to expression, expressed in seeds and seedlings. In roots, confined to lateral root caps and columella cells.

The protein localises to the nucleus. The protein resides in the cytoplasm. It localises to the cell membrane. It carries out the reaction O-phospho-L-seryl-[protein] + H2O = L-seryl-[protein] + phosphate. The catalysed reaction is O-phospho-L-threonyl-[protein] + H2O = L-threonyl-[protein] + phosphate. With respect to regulation, phosphatase activity repressed by oxidized GPX3 and phosphatidic acid (PA). PA is produced by PLD alpha 1 in response to ABA. Repressed by PYR/PYL/RCAR ABA receptors in an ABA-dependent manner. Functionally, key component and repressor of the abscisic acid (ABA) signaling pathway that regulates numerous ABA responses, such as stomatal closure, osmotic water permeability of the plasma membrane (Pos), drought-induced resistance and rhizogenesis, response to glucose, high light stress, seed germination and inhibition of vegetative growth. During the stomatal closure regulation, modulates the inward calcium-channel permeability as well as the actin reorganization in guard cells in response to ABA. Involved in the resistance to the bacterial pathogen Pseudomonas syringae pv. tomato. Controls negatively fibrillin expression that is involved in mediating ABA-induced photoprotection. May be involved in ABA content regulation. Plays a role in the Pro accumulation in response to reduced water availability (low water potential). Required for the ABA negative regulation of the ethylene-induced hyponastic growth. Involved in acquired thermotolerance of root growth and seedling survival. Activates/represses SRK2E/OST1 in response to ABA-dependent stimuli, especially in stomata closure regulation involving SLAC1. Represses MAPKKK18 activity and promotes MAPKKK18 degradation by the proteasome pathway upon abscisic acid (ABA) treatment. Represses KIN10 activity by the specific dephosphorylation of its T-loop Thr-198, leading to a poststress inactivation of SnRK1 signaling. Restricts MAPKKK20 activity by dephosphorylation. The polypeptide is Protein phosphatase 2C 56 (Arabidopsis thaliana (Mouse-ear cress)).